A 366-amino-acid chain; its full sequence is Alanine racemase (366 aa).

Lys-33 (proton acceptor; specific for D-alanine) is an active-site residue. At Lys-33 the chain carries N6-(pyridoxal phosphate)lysine. Arg-129 is a substrate binding site. Catalysis depends on Tyr-253, which acts as the Proton acceptor; specific for L-alanine. A substrate-binding site is contributed by Met-301.

This sequence belongs to the alanine racemase family. Pyridoxal 5'-phosphate serves as cofactor.

The catalysed reaction is L-alanine = D-alanine. The protein operates within amino-acid biosynthesis; D-alanine biosynthesis; D-alanine from L-alanine: step 1/1. In terms of biological role, catalyzes the interconversion of L-alanine and D-alanine. May also act on other amino acids. The sequence is that of Alanine racemase (alr) from Xanthomonas oryzae pv. oryzae (strain KACC10331 / KXO85).